The primary structure comprises 305 residues: UDP-3-O-acyl-N-acetylglucosamine deacetylase (305 aa).

Zn(2+) is bound by residues His79, His238, and Asp242. His265 acts as the Proton donor in catalysis.

This sequence belongs to the LpxC family. It depends on Zn(2+) as a cofactor.

It catalyses the reaction a UDP-3-O-[(3R)-3-hydroxyacyl]-N-acetyl-alpha-D-glucosamine + H2O = a UDP-3-O-[(3R)-3-hydroxyacyl]-alpha-D-glucosamine + acetate. Its pathway is glycolipid biosynthesis; lipid IV(A) biosynthesis; lipid IV(A) from (3R)-3-hydroxytetradecanoyl-[acyl-carrier-protein] and UDP-N-acetyl-alpha-D-glucosamine: step 2/6. Catalyzes the hydrolysis of UDP-3-O-myristoyl-N-acetylglucosamine to form UDP-3-O-myristoylglucosamine and acetate, the committed step in lipid A biosynthesis. The polypeptide is UDP-3-O-acyl-N-acetylglucosamine deacetylase (Edwardsiella ictaluri (strain 93-146)).